The sequence spans 254 residues: Flavin-dependent thymidylate synthase (254 aa).

One can recognise a ThyX domain in the interval 7–237 (LRVQLIARTE…PAVFADFEIY (231 aa)). FAD-binding positions include Ser71, 95–97 (RHR), and Gln103. Residues 92–95 (ELIR), 103–107 (QLSQR), and Arg176 each bind dUMP. The ThyX motif motif lies at 95-105 (RHRHFSYSQLS). Residues 192 to 194 (NYR) and His198 each bind FAD. Arg203 contributes to the dUMP binding site. The active-site Involved in ionization of N3 of dUMP, leading to its activation is Arg203.

The protein belongs to the thymidylate synthase ThyX family. Homotetramer. Requires FAD as cofactor.

It carries out the reaction dUMP + (6R)-5,10-methylene-5,6,7,8-tetrahydrofolate + NADPH + H(+) = dTMP + (6S)-5,6,7,8-tetrahydrofolate + NADP(+). It functions in the pathway pyrimidine metabolism; dTTP biosynthesis. In terms of biological role, catalyzes the reductive methylation of 2'-deoxyuridine-5'-monophosphate (dUMP) to 2'-deoxythymidine-5'-monophosphate (dTMP) while utilizing 5,10-methylenetetrahydrofolate (mTHF) as the methyl donor, and NADPH and FADH(2) as the reductant. This is Flavin-dependent thymidylate synthase from Mycobacterium sp. (strain KMS).